The sequence spans 102 residues: NADH-quinone oxidoreductase subunit K (102 aa).

3 helical membrane passes run 6-26 (LEHGLALASVLFALGLVGLMV), 30-50 (ILFVLMSLEVMMNAAALAFVV), and 62-82 (VMFILVLSLAAAEASIGLAIL).

It belongs to the complex I subunit 4L family. NDH-1 is composed of 13 different subunits. Subunits NuoA, H, J, K, L, M, N constitute the membrane sector of the complex.

The protein resides in the cell inner membrane. It carries out the reaction a quinone + NADH + 5 H(+)(in) = a quinol + NAD(+) + 4 H(+)(out). Functionally, NDH-1 shuttles electrons from NADH, via FMN and iron-sulfur (Fe-S) centers, to quinones in the respiratory chain. The immediate electron acceptor for the enzyme in this species is believed to be ubiquinone. Couples the redox reaction to proton translocation (for every two electrons transferred, four hydrogen ions are translocated across the cytoplasmic membrane), and thus conserves the redox energy in a proton gradient. The protein is NADH-quinone oxidoreductase subunit K of Pseudomonas aeruginosa (strain LESB58).